Reading from the N-terminus, the 158-residue chain is Histone H2B.1 (158 aa).

Residues K7 and K25 each carry the N6-acetyllysine modification. 2 disordered regions span residues 26–45 (AAAG…PKKG) and 135–158 (VHNF…GQQT). The span at 135–144 (VHNFESETSK) shows a compositional bias: basic and acidic residues. The span at 147–158 (SQGRKRGRGQQT) shows a compositional bias: basic residues.

It belongs to the histone H2B family. In terms of assembly, the nucleosome is a histone octamer containing two molecules each of H2A, H2B, H3 and H4 assembled in one H3-H4 heterotetramer and two H2A-H2B heterodimers. The octamer wraps approximately 147 bp of DNA. In terms of processing, can be acetylated to form H2BK6ac and H2BK33ac. As to expression, expressed in the generative cell within the bicellular pollen. Not detected in other reproductive or vegetative tissues.

Its subcellular location is the nucleus. The protein localises to the chromosome. Core component of nucleosome. Nucleosomes wrap and compact DNA into chromatin, limiting DNA accessibility to the cellular machineries which require DNA as a template. Histones thereby play a central role in transcription regulation, DNA repair, DNA replication and chromosomal stability. DNA accessibility is regulated via a complex set of post-translational modifications of histones, also called histone code, and nucleosome remodeling. The polypeptide is Histone H2B.1 (Lilium longiflorum (Trumpet lily)).